Consider the following 321-residue polypeptide: MSEQSKDLSDPNFAAEAPNSEVHSSPGVSEGVPPSATLAEPQSPPLGPTAAPQAAPPPQAPNDEGDPKALQQAAEEGRAHQAPSAAQPGPAPPAPAQLVQKAHELMWYVLVKDQKKMIIWFPDMVKDVIGSYKKWCRSILRRTSLILARVFGLHLRLTSLHTMEFALVKALEPEELDRVALSNRMPMTGLLLMILSLIYVKGRGARESAVWNVLRILGLRPWKKHSTFGDVRKLITEEFVQMNYLKYQRVPYVEPPEYEFFWGSRASREITKMQIMEFLARVFKKDPQAWPSRYREALEEARALREANPTAHYPRSSVSED.

The interval 1 to 96 (MSEQSKDLSD…QPGPAPPAPA (96 aa)) is disordered. Positions 20-35 (SEVHSSPGVSEGVPPS) are enriched in low complexity. An MAGE domain is found at 98–297 (LVQKAHELMW…QAWPSRYREA (200 aa)).

In terms of assembly, binds to the transactivation domains of E2F1 and p53. Binds also SV40 large T antigen and adenovirus E1A. Interacts with nucleobindin 1 and 2. As to expression, almost ubiquitous. Detected in fetal brain, lung, liver and kidney; in adult heart, brain, placenta, lung, liver, skeletal muscle, kidney, pancreas, spleen, thymus, prostate, testis, ovary, small intestine and colon. Not detected in peripheral blood leukocytes. In brain, restricted to post-mitotic neurons.

It localises to the perikaryon. The protein resides in the nucleus. Its function is as follows. Growth suppressor that facilitates the entry of the cell into cell cycle arrest. Functionally similar to the retinoblastoma protein it binds to and represses the activity of cell-cycle-promoting proteins such as SV40 large T antigen, adenovirus E1A, and the transcription factor E2F. Necdin also interacts with p53 and works in an additive manner to inhibit cell growth. Also functions as a transcription factor and directly binds to specific guanosine-rich DNA sequences. This Homo sapiens (Human) protein is Necdin (NDN).